A 195-amino-acid chain; its full sequence is Interferon tau (195 aa).

The N-terminal stretch at 1 to 23 is a signal peptide; the sequence is MAFVLSLLMALVLASYSPGGSLG. 2 cysteine pairs are disulfide-bonded: Cys24-Cys122 and Cys52-Cys162.

Belongs to the alpha/beta interferon family. IFN-alphaII subfamily. Constitutively and exclusively expressed in the mononuclear cells of the extraembryonic trophectoderm.

It localises to the secreted. Functionally, paracrine hormone primarily responsible for maternal recognition of pregnancy. Interacts with endometrial receptors, probably type I interferon receptors, and blocks estrogen receptor expression, preventing the estrogen-induced increase in oxytocin receptor expression in the endometrium. This results in the suppression of the pulsatile endometrial release of the luteolytic hormone prostaglandin F2-alpha, hindering the regression of the corpus luteum (luteolysis) and therefore a return to ovarian cyclicity. This, and a possible direct effect of IFN-tau on prostaglandin synthesis, leads in turn to continued ovarian progesterone secretion, which stimulates the secretion by the endometrium of the nutrients required for the growth of the conceptus. In summary, displays particularly high antiviral and antiproliferative potency concurrently with particular weak cytotoxicity, high antiluteolytic activity and immunomodulatory properties. In contrast with other IFNs, IFN-tau is not virally inducible. The protein is Interferon tau (IFNT) of Cervus elaphus (Red deer).